Reading from the N-terminus, the 142-residue chain is Galactose-6-phosphate isomerase subunit LacA 2 (142 aa).

It belongs to the LacAB/RpiB family. Heteromultimeric protein consisting of LacA and LacB.

It catalyses the reaction aldehydo-D-galactose 6-phosphate = keto-D-tagatose 6-phosphate. The protein operates within carbohydrate metabolism; D-galactose 6-phosphate degradation; D-tagatose 6-phosphate from D-galactose 6-phosphate: step 1/1. The chain is Galactose-6-phosphate isomerase subunit LacA 2 from Streptococcus pyogenes serotype M3 (strain ATCC BAA-595 / MGAS315).